The chain runs to 369 residues: Glutamate 5-kinase (369 aa).

Residue Lys-11 participates in ATP binding. Ser-51, Asp-138, and Asn-150 together coordinate substrate. Residues 170–171 (TD) and 212–218 (TGGMATK) contribute to the ATP site. The PUA domain maps to 277–355 (KGSIVIDEGA…QDIYAVLGYE (79 aa)).

Belongs to the glutamate 5-kinase family.

It is found in the cytoplasm. The catalysed reaction is L-glutamate + ATP = L-glutamyl 5-phosphate + ADP. Its pathway is amino-acid biosynthesis; L-proline biosynthesis; L-glutamate 5-semialdehyde from L-glutamate: step 1/2. Its function is as follows. Catalyzes the transfer of a phosphate group to glutamate to form L-glutamate 5-phosphate. This Aliivibrio fischeri (strain ATCC 700601 / ES114) (Vibrio fischeri) protein is Glutamate 5-kinase.